We begin with the raw amino-acid sequence, 135 residues long: Alpha-ketoglutarate dehydrogenase subunit 4, mitochondrial (135 aa).

This sequence belongs to the alpha-ketoglutarate dehydrogenase component 4 family. As to quaternary structure, component of the 2-oxoglutarate dehydrogenase complex (OGDC), also called alpha-ketoglutarate dehydrogenase (KGDH) complex. The copmplex is composed of the catalytic subunits OGDH (2-oxoglutarate dehydrogenase; also called E1 subunit), DLST (dihydrolipoamide succinyltransferase; also called E2 subunit) and DLD (dihydrolipoamide dehydrogenase; also called E3 subunit), and the assembly factor KGD4. Within OGDC, interacts (via N-terminus) with E3 subunit and (via C-terminus) with the complex core formed by E1 and E2 subunits.

It localises to the mitochondrion. In terms of biological role, molecular adapter that is necessary to a form a stable 2-oxoglutarate dehydrogenase enzyme complex (OGDC). Required for incorporation of the E3 subunit into the E1-E2 core of mitochondrial OGDC, and acting as a stability factor for the fully assembled complex. The protein is Alpha-ketoglutarate dehydrogenase subunit 4, mitochondrial (KGD4) of Chaetomium thermophilum (strain DSM 1495 / CBS 144.50 / IMI 039719) (Thermochaetoides thermophila).